Here is a 527-residue protein sequence, read N- to C-terminus: Light-independent protochlorophyllide reductase subunit B (527 aa).

Position 36 (Asp-36) interacts with [4Fe-4S] cluster. Asp-290 acts as the Proton donor in catalysis. 425 to 426 (GL) is a binding site for substrate.

It belongs to the ChlB/BchB/BchZ family. In terms of assembly, protochlorophyllide reductase is composed of three subunits; ChlL, ChlN and ChlB. Forms a heterotetramer of two ChlB and two ChlN subunits. It depends on [4Fe-4S] cluster as a cofactor.

The catalysed reaction is chlorophyllide a + oxidized 2[4Fe-4S]-[ferredoxin] + 2 ADP + 2 phosphate = protochlorophyllide a + reduced 2[4Fe-4S]-[ferredoxin] + 2 ATP + 2 H2O. The protein operates within porphyrin-containing compound metabolism; chlorophyll biosynthesis (light-independent). Its function is as follows. Component of the dark-operative protochlorophyllide reductase (DPOR) that uses Mg-ATP and reduced ferredoxin to reduce ring D of protochlorophyllide (Pchlide) to form chlorophyllide a (Chlide). This reaction is light-independent. The NB-protein (ChlN-ChlB) is the catalytic component of the complex. The chain is Light-independent protochlorophyllide reductase subunit B from Synechococcus sp. (strain RCC307).